Consider the following 409-residue polypeptide: Glycosaminoglycan xylosylkinase (409 aa).

The Cytoplasmic segment spans residues 1-6 (MKLKQR). The helical; Signal-anchor for type II membrane protein transmembrane segment at 7–25 (VVVLCAVLFLLGLAKVFLL) threads the bilayer. Residues 26 to 409 (DGGEGSAASR…IEDRMNLPHP (384 aa)) are Lumenal-facing. Residues Q107 and K123 each contribute to the ATP site. Position 142 (D142) interacts with Mn(2+). N193 carries an N-linked (GlcNAc...) asparagine glycan. 2 disulfide bridges follow: C196-C211 and C201-C204. Residue 222–225 (TLWL) participates in ATP binding. Disulfide bonds link C257–C331 and C332–C389. Residue D289 is part of the active site. ATP is bound by residues E294 and D309. D309 provides a ligand contact to Mn(2+).

This sequence belongs to the FAM20 family. Mn(2+) serves as cofactor.

It localises to the golgi apparatus membrane. It carries out the reaction 3-O-(beta-D-galactosyl-(1-&gt;3)-beta-D-galactosyl-(1-&gt;4)-beta-D-xylosyl)-L-seryl-[protein] + ATP = 3-O-(beta-D-galactosyl-(1-&gt;3)-beta-D-galactosyl-(1-&gt;4)-beta-D-2-O-phosphoxylosyl)-L-seryl-[protein] + ADP + H(+). Functionally, responsible for the 2-O-phosphorylation of xylose in the glycosaminoglycan-protein linkage region of proteoglycans thereby regulating the amount of mature GAG chains. Sulfated glycosaminoglycans (GAGs), including heparan sulfate and chondroitin sulfate, are synthesized on the so-called common GAG-protein linkage region (GlcUAbeta1-3Galbeta1-3Galbeta1-4Xylbeta1-O-Ser) of core proteins, which is formed by the stepwise addition of monosaccharide residues by the respective specific glycosyltransferases. This is Glycosaminoglycan xylosylkinase from Danio rerio (Zebrafish).